The chain runs to 328 residues: L-lactate dehydrogenase (328 aa).

NAD(+) contacts are provided by residues V18, E39, K46, Y71, and 85–86 (GA). Positions 88 and 94 each coordinate substrate. Residues S107, 124–126 (AAN), and S149 contribute to the NAD(+) site. Position 126–129 (126–129 (NPVD)) interacts with substrate. 154 to 157 (DSAR) serves as a coordination point for substrate. The beta-D-fructose 1,6-bisphosphate site is built by R159 and H174. H181 (proton acceptor) is an active-site residue. Y226 carries the phosphotyrosine modification. T235 lines the substrate pocket.

The protein belongs to the LDH/MDH superfamily. LDH family. Homotetramer.

The protein localises to the cytoplasm. It carries out the reaction (S)-lactate + NAD(+) = pyruvate + NADH + H(+). Its pathway is fermentation; pyruvate fermentation to lactate; (S)-lactate from pyruvate: step 1/1. With respect to regulation, allosterically activated by fructose 1,6-bisphosphate (FBP). Its function is as follows. Catalyzes the conversion of lactate to pyruvate. The sequence is that of L-lactate dehydrogenase from Streptococcus pneumoniae (strain ATCC BAA-255 / R6).